The following is a 906-amino-acid chain: MLSLVQKIIGSRNERFIKKVSRIVQKINSLEPEFEKLSDEQLKAKTFEYRERLANGEILDNLLPEAFATVREAGKRTKNMRHYDVQLIGGIVLHQGKVAEMRTGEGKTLVATLPAYLNALTGDGVHVITVNDYLAKRDAELMSDIYEFLGMSVGVIVADLNPQQRKEAYACDITYGTNNEFGFDYLRDNMAYEKEQQVQRSRNYVIIDEVDSILIDEARTPLIISGASDDSSEMYNLFNRLVPYLEKQEKEEVENEQEQRDFYVDEKSKNAYLTEKGYAKIENMLKKEGILEEDDNLYSPHNITKMHYLNACLRAHSLYQLNIDYIVRDQEIVIIDESTGRAMPGRRWSDGLHQAIEAKEGVKINAENQTMASITFQNFFKLYNKIAGMTGTADTEAFELHSIYGLEVIIIPTNKPMIRKDHHDEIYGSVREKFDAIVEDIKERISKGQPVLVGTASIEASEVLSTLLKKKKIRHNVLNAKQHEKEASIIAMAGYPGNVTIATNMAGRGTDIILGGNLEVEIAQLEDPTPEDIAQIKAEWLKRNEAVKKAGGLCIIGSERHDSRRIDNQLRGRAARQGDPGESKFYLSMDDNLLRIFASQSMAERVKKGLKGGESLAFGFMSKVISKAQGKVESYHFDIRKNLLEYDNVVNTQRKVIYEQRQSFLEAEDVSDILADIRIDVAEQLFHDYVPAGSMHELWDLEGLEKALKSDFMIELDLQKLYQEDDSLGEEDLKKLVREAIEIEFVEKTKNLDSGAVRQFEKFSLLQSLDTHWREHLSSIDHLRNSINLRGYAQKDPKNEYKKEAFELFSTMLDNFKYEVISSLAKIRIATEEETQRAQQEWQESMSDIKAEHESVIDNNQRHDEDEQEETPKVQQVRREGPKVKRNDPCPCGSGKKYKQCHGKVE.

ATP-binding positions include glutamine 86, 104–108, and aspartate 511; that span reads GEGKT. 2 stretches are compositionally biased toward basic and acidic residues: residues 853-865 and 877-888; these read HESV…RHDE and VRREGPKVKRND. The interval 853-906 is disordered; that stretch reads HESVIDNNQRHDEDEQEETPKVQQVRREGPKVKRNDPCPCGSGKKYKQCHGKVE. The Zn(2+) site is built by cysteine 890, cysteine 892, cysteine 901, and histidine 902. Positions 896–906 are enriched in basic residues; the sequence is KKYKQCHGKVE.

It belongs to the SecA family. In terms of assembly, monomer and homodimer. Part of the essential Sec protein translocation apparatus which comprises SecA, SecYEG and auxiliary proteins SecDF-YajC and YidC. The cofactor is Zn(2+).

The protein resides in the cell inner membrane. It localises to the cytoplasm. It carries out the reaction ATP + H2O + cellular proteinSide 1 = ADP + phosphate + cellular proteinSide 2.. Its function is as follows. Part of the Sec protein translocase complex. Interacts with the SecYEG preprotein conducting channel. Has a central role in coupling the hydrolysis of ATP to the transfer of proteins into and across the cell membrane, serving both as a receptor for the preprotein-SecB complex and as an ATP-driven molecular motor driving the stepwise translocation of polypeptide chains across the membrane. The polypeptide is Protein translocase subunit SecA (Francisella tularensis subsp. novicida (strain U112)).